The sequence spans 285 residues: MGTPGEGLGRCSHALIRGVPESLASGEGAGAGLPALDLAKAQREHGVLGGKLRQRLGLQLLELPPEESLPLGPLLGDTAVIQGDTALITRPWSPARRPEVDGVRKALQDLGLRIVEIGDENATLDGTDVLFTGREFFVGLSKWTNHRGAEIVADTFRDFAVSTVPVSGPSHLRGLCGMGGPRTVVAGSSDAAQKAVRAMAVLTDHPYASLTLPDDAAADCLFLRPGLPGVPPFLLHRGGGDLPNSQEALQKLSDVTLVPVSCSELEKAGAGLSSLCLVLSTRPHS.

H171 (proton donor) is an active-site residue. Catalysis depends on C276, which acts as the Nucleophile.

It belongs to the DDAH family. Phosphorylated by TBK1. Phosphorylation inhibits the translocation into the mitochondrion upon Sendai viral infection. In terms of tissue distribution, detected in heart, placenta, lung, liver, skeletal muscle, kidney and pancreas, and at very low levels in brain.

Its subcellular location is the cytoplasm. The protein resides in the mitochondrion. Putative hydrolase with unknown substrate. Does not hydrolyze N(G),N(G)-dimethyl-L-arginine (ADMA) which acts as an inhibitor of NOS. In endothelial cells, induces expression of vascular endothelial growth factor (VEGF) via phosphorylation of the transcription factor SP1 by PKA in a process that is independent of NO and NO synthase. Similarly, enhances pancreatic insulin secretion through SP1-mediated transcriptional up-regulation of secretagogin/SCGN, an insulin vesicle docking protein. Upon viral infection, relocates to mitochondria where it promotes mitochondrial fission through activation of DNM1L leading to the inhibition of innate response activation mediated by MAVS. The sequence is that of Putative hydrolase DDAH2 from Homo sapiens (Human).